The sequence spans 126 residues: MLLNRTSFVTLFAAGMLVSALAQAHPKLVSSTPAEGSEGAAPAKIELHFSENLVTQFSGAKLVMTAMPGMEHSPMAVKAAVSGGGDPKTMVITPASPLTAGTYKVDWRAVSSDTHPITGSVTFKVK.

The signal sequence occupies residues 1-24 (MLLNRTSFVTLFAAGMLVSALAQA). Residue His25 participates in Cu(2+) binding. Residues Met64, Met67, Met70, His72, and Met75 each coordinate Cu(+). Position 115 (His115) interacts with Cu(2+).

Belongs to the CopC family. Monomer.

The protein resides in the periplasm. The redox state of copper bound to CopC may act as a switch between the possible trafficking pathways of the metal ion. In terms of biological role, copper-binding protein involved in copper resistance and homeostasis. Probably mediates copper resistance by sequestering the excess of copper in the periplasm. May act as a copper carrier in the oxidizing periplasmic space that exchanges either Cu(I) or Cu(II) with its putative partners CopA, CopB and CopD. The chain is Copper resistance protein C from Pseudomonas syringae pv. tomato.